Reading from the N-terminus, the 122-residue chain is Ribosomal protein eL22-like 1 (122 aa).

A phosphoserine mark is found at serine 112, serine 118, and serine 120.

The protein belongs to the eukaryotic ribosomal protein eL22 family.

The polypeptide is Ribosomal protein eL22-like 1 (Rpl22l1) (Mus musculus (Mouse)).